The chain runs to 123 residues: Small ribosomal subunit protein eS8 (123 aa).

The segment at 1-38 (MKDQGRSPRKRTGGRRRPNHKKKKHELGKDTVETQVGE) is disordered. Residues 7 to 26 (SPRKRTGGRRRPNHKKKKHE) show a composition bias toward basic residues.

In terms of assembly, part of the 30S ribosomal subunit.

The sequence is that of Small ribosomal subunit protein eS8 (rps8e) from Haloarcula marismortui (strain ATCC 43049 / DSM 3752 / JCM 8966 / VKM B-1809) (Halobacterium marismortui).